A 349-amino-acid chain; its full sequence is Anthranilate phosphoribosyltransferase (349 aa).

Residues G84, 87–88, T92, 94–97, 112–120, and S124 contribute to the 5-phospho-alpha-D-ribose 1-diphosphate site; these read GD, NIST, and KHGNRAASS. G84 contacts anthranilate. S96 is a binding site for Mg(2+). N115 contributes to the anthranilate binding site. R170 lines the anthranilate pocket. The Mg(2+) site is built by D228 and E229.

It belongs to the anthranilate phosphoribosyltransferase family. As to quaternary structure, homodimer. It depends on Mg(2+) as a cofactor.

It carries out the reaction N-(5-phospho-beta-D-ribosyl)anthranilate + diphosphate = 5-phospho-alpha-D-ribose 1-diphosphate + anthranilate. It functions in the pathway amino-acid biosynthesis; L-tryptophan biosynthesis; L-tryptophan from chorismate: step 2/5. Catalyzes the transfer of the phosphoribosyl group of 5-phosphorylribose-1-pyrophosphate (PRPP) to anthranilate to yield N-(5'-phosphoribosyl)-anthranilate (PRA). The protein is Anthranilate phosphoribosyltransferase of Leifsonia xyli subsp. xyli (strain CTCB07).